We begin with the raw amino-acid sequence, 204 residues long: Imidazoleglycerol-phosphate dehydratase (204 aa).

Belongs to the imidazoleglycerol-phosphate dehydratase family.

It localises to the cytoplasm. It carries out the reaction D-erythro-1-(imidazol-4-yl)glycerol 3-phosphate = 3-(imidazol-4-yl)-2-oxopropyl phosphate + H2O. It participates in amino-acid biosynthesis; L-histidine biosynthesis; L-histidine from 5-phospho-alpha-D-ribose 1-diphosphate: step 6/9. This chain is Imidazoleglycerol-phosphate dehydratase, found in Corynebacterium urealyticum (strain ATCC 43042 / DSM 7109).